The primary structure comprises 174 residues: NADH-ubiquinone oxidoreductase chain 6 (174 aa).

The next 4 helical transmembrane spans lie at 24–44, 53–73, 82–102, and 143–163; these read LALG…TGLM, ILFL…TSLA, MKLT…SFIM, and FITI…VKIT.

It belongs to the complex I subunit 6 family.

The protein localises to the mitochondrion membrane. It catalyses the reaction a ubiquinone + NADH + 5 H(+)(in) = a ubiquinol + NAD(+) + 4 H(+)(out). In terms of biological role, core subunit of the mitochondrial membrane respiratory chain NADH dehydrogenase (Complex I) that is believed to belong to the minimal assembly required for catalysis. Complex I functions in the transfer of electrons from NADH to the respiratory chain. The immediate electron acceptor for the enzyme is believed to be ubiquinone. This chain is NADH-ubiquinone oxidoreductase chain 6 (mt:ND6), found in Drosophila melanogaster (Fruit fly).